We begin with the raw amino-acid sequence, 357 residues long: DNA integrity scanning protein DisA (357 aa).

The 139-residue stretch at 3 to 141 (RPTLRETVAR…GGERHVVADS (139 aa)) folds into the DAC domain. ATP is bound by residues G70, L88, and 101–105 (TRHRS).

It belongs to the DisA family. Homooctamer. The cofactor is Mg(2+).

The enzyme catalyses 2 ATP = 3',3'-c-di-AMP + 2 diphosphate. Functionally, participates in a DNA-damage check-point. DisA forms globular foci that rapidly scan along the chromosomes searching for lesions. Its function is as follows. Also has diadenylate cyclase activity, catalyzing the condensation of 2 ATP molecules into cyclic di-AMP (c-di-AMP). c-di-AMP likely acts as a signaling molecule that may couple DNA integrity with a cellular process. The polypeptide is DNA integrity scanning protein DisA (Mycobacterium avium (strain 104)).